Here is a 579-residue protein sequence, read N- to C-terminus: Laccase-4 (579 aa).

The first 28 residues, methionine 1–glycine 28, serve as a signal peptide directing secretion. Plastocyanin-like domains lie at asparagine 36 to glycine 152 and lysine 162 to proline 316. 2 N-linked (GlcNAc...) asparagine glycosylation sites follow: asparagine 41 and asparagine 82. Cu cation is bound by residues histidine 86 and histidine 88. A glycan (N-linked (GlcNAc...) asparagine) is linked at asparagine 118. Histidine 131 and histidine 133 together coordinate Cu cation. N-linked (GlcNAc...) asparagine glycans are attached at residues asparagine 191, asparagine 207, asparagine 243, asparagine 304, asparagine 340, asparagine 347, asparagine 386, asparagine 393, asparagine 403, asparagine 439, asparagine 446, and asparagine 462. The 135-residue stretch at aspartate 429–serine 563 folds into the Plastocyanin-like 3 domain. Histidine 480, histidine 483, histidine 485, histidine 542, cysteine 543, histidine 544, and histidine 548 together coordinate Cu cation.

The protein belongs to the multicopper oxidase family. Cu cation serves as cofactor.

Its subcellular location is the secreted. The protein resides in the extracellular space. It localises to the apoplast. It carries out the reaction 4 hydroquinone + O2 = 4 benzosemiquinone + 2 H2O. In terms of biological role, lignin degradation and detoxification of lignin-derived products. This chain is Laccase-4 (LAC4), found in Oryza sativa subsp. japonica (Rice).